The primary structure comprises 325 residues: Xylosidase/arabinosidase (325 aa).

Catalysis depends on aspartate 16, which acts as the Proton acceptor. Glutamate 224 functions as the Proton donor in the catalytic mechanism.

This sequence belongs to the glycosyl hydrolase 43 family.

The enzyme catalyses Hydrolysis of (1-&gt;4)-beta-D-xylans, to remove successive D-xylose residues from the non-reducing termini.. The catalysed reaction is Hydrolysis of terminal non-reducing alpha-L-arabinofuranoside residues in alpha-L-arabinosides.. The sequence is that of Xylosidase/arabinosidase (xsa) from Bacteroides ovatus.